The sequence spans 430 residues: Protein translocase subunit SecY (430 aa).

A run of 10 helical transmembrane segments spans residues 18–38 (IFFTLAMLVIFKIGTYIPAPG), 68–88 (FSIFAMGIMPYITASIVMQLL), 117–137 (FAIILAFIQSIGMAFQFNNYL), 147–167 (VMSYLLIAVVLTAGTAFLIWL), 174–194 (FGVGNGISLIIFAGILSTLPS), 217–237 (ILGLIVALILLTVGAIFVLEA), 270–290 (VIPVIFAMAFFLLPRTLTLFF), 308–328 (NIGMIIYVVLIIAFAYFYAFV), 368–388 (FVGSIFLAAIAILPIIATKFM), and 389–409 (GLPQSIQIGGTSLLIVIGVAI).

The protein belongs to the SecY/SEC61-alpha family. As to quaternary structure, component of the Sec protein translocase complex. Heterotrimer consisting of SecY, SecE and SecG subunits. The heterotrimers can form oligomers, although 1 heterotrimer is thought to be able to translocate proteins. Interacts with the ribosome. Interacts with SecDF, and other proteins may be involved. Interacts with SecA.

It is found in the cell membrane. Its function is as follows. The central subunit of the protein translocation channel SecYEG. Consists of two halves formed by TMs 1-5 and 6-10. These two domains form a lateral gate at the front which open onto the bilayer between TMs 2 and 7, and are clamped together by SecE at the back. The channel is closed by both a pore ring composed of hydrophobic SecY resides and a short helix (helix 2A) on the extracellular side of the membrane which forms a plug. The plug probably moves laterally to allow the channel to open. The ring and the pore may move independently. The chain is Protein translocase subunit SecY from Staphylococcus epidermidis (strain ATCC 35984 / DSM 28319 / BCRC 17069 / CCUG 31568 / BM 3577 / RP62A).